A 258-amino-acid chain; its full sequence is Coiled-coil domain-containing protein 127 (258 aa).

Residues 50–170 (KEIEKEKEAC…EEALAERQSI (121 aa)) are a coiled coil.

This chain is Coiled-coil domain-containing protein 127 (CCDC127), found in Sus scrofa (Pig).